Here is a 232-residue protein sequence, read N- to C-terminus: Orotidine 5'-phosphate decarboxylase (232 aa).

Residues Asp-11, Lys-33, Asp-60–Thr-69, Thr-120, Arg-181, Gln-191, Gly-211, and Arg-212 contribute to the substrate site. Catalysis depends on Lys-62, which acts as the Proton donor.

This sequence belongs to the OMP decarboxylase family. Type 1 subfamily. As to quaternary structure, homodimer.

The catalysed reaction is orotidine 5'-phosphate + H(+) = UMP + CO2. It participates in pyrimidine metabolism; UMP biosynthesis via de novo pathway; UMP from orotate: step 2/2. Functionally, catalyzes the decarboxylation of orotidine 5'-monophosphate (OMP) to uridine 5'-monophosphate (UMP). The protein is Orotidine 5'-phosphate decarboxylase of Tolumonas auensis (strain DSM 9187 / NBRC 110442 / TA 4).